We begin with the raw amino-acid sequence, 141 residues long: uncharacterized protein (141 aa).

This is an uncharacterized protein from Listeria innocua serovar 6a (strain ATCC BAA-680 / CLIP 11262).